The chain runs to 141 residues: Cystatin (141 aa).

The signal sequence occupies residues 1–26 (MLHSQLPVAAPLRLLCALLLLPSVTM). A Cystatin domain is found at 29–129 (GGLSPRSVTD…CRFQVWSRPW (101 aa)). Residues 73–77 (QVVTG) carry the Secondary area of contact motif. Disulfide bonds link Cys-91–Cys-107 and Cys-120–Cys-140.

This sequence belongs to the cystatin family. In terms of tissue distribution, expressed at a low level by the venom gland (at protein level).

Its subcellular location is the secreted. Inhibits various C1 cysteine proteases including cathepsin L, papain and cathepsin B. This protein has no toxic activity and its function in the venom is unknown. It may play a role as a housekeeping or regulatory protein. The protein is Cystatin of Hoplocephalus stephensii (Stephens's banded snake).